Consider the following 142-residue polypeptide: MAAMTVQLDMVSAENHIFSGRVAQLQVSGTEGELGIMPGHAALLTSIKPGMARIVKQNGSEEVFYLSGGILEVQPSSISVLADVVLRADEIDEQAAAEAKLRAETAMAGAGADFNYAAAAVELAQAIAQLRVVETIKKNIAR.

It belongs to the ATPase epsilon chain family. F-type ATPases have 2 components, CF(1) - the catalytic core - and CF(0) - the membrane proton channel. CF(1) has five subunits: alpha(3), beta(3), gamma(1), delta(1), epsilon(1). CF(0) has three main subunits: a, b and c.

The protein localises to the cell inner membrane. In terms of biological role, produces ATP from ADP in the presence of a proton gradient across the membrane. The polypeptide is ATP synthase epsilon chain (Shewanella pealeana (strain ATCC 700345 / ANG-SQ1)).